Here is a 254-residue protein sequence, read N- to C-terminus: SLA class II histocompatibility antigen, DQ haplotype C alpha chain (254 aa).

Positions Met1–Gly23 are cleaved as a signal peptide. The interval Glu24 to Lys120 is alpha-1. Residues Glu24 to Glu216 are Extracellular-facing. Asn104 and Asn144 each carry an N-linked (GlcNAc...) asparagine glycan. The 92-residue stretch at Pro113–Glu204 folds into the Ig-like C1-type domain. Residues Ser121–Trp203 form an alpha-2 region. The cysteines at positions 133 and 188 are disulfide-linked. Positions Glu204–Glu216 are connecting peptide. Residues Thr217 to Ile239 form a helical membrane-spanning segment. Topologically, residues Gln240 to Leu254 are cytoplasmic.

It belongs to the MHC class II family.

It localises to the membrane. The protein is SLA class II histocompatibility antigen, DQ haplotype C alpha chain of Sus scrofa (Pig).